Consider the following 318-residue polypeptide: Fibronectin type III domain-containing protein 11 (318 aa).

Residues 210-307 form the Fibronectin type-III domain; it reads VVFDRKASAA…DSLTLHTKPE (98 aa).

The sequence is that of Fibronectin type III domain-containing protein 11 (FNDC11) from Homo sapiens (Human).